The sequence spans 83 residues: Short neurotoxin II (83 aa).

Residues 1–21 (MKTLLLTLVVVTVVCLDLGYT) form the signal peptide. Cystine bridges form between Cys24–Cys45, Cys38–Cys62, Cys64–Cys75, and Cys76–Cys81.

It belongs to the three-finger toxin family. Short-chain subfamily. Type I alpha-neurotoxin sub-subfamily. Expressed by the venom gland.

It is found in the secreted. In terms of biological role, binds to muscle nicotinic acetylcholine receptor (nAChR) and inhibit acetylcholine from binding to the receptor, thereby impairing neuromuscular transmission. The polypeptide is Short neurotoxin II (Laticauda colubrina (Yellow-lipped sea krait)).